The sequence spans 522 residues: BTB/POZ domain-containing protein 3 (522 aa).

Residues 120 to 190 enclose the BTB domain; the sequence is ADVHFVVGPP…IYCDEIDLAA (71 aa). One can recognise a BACK domain in the interval 235-300; sequence FEEPDLTQRC…NWAEVECQRQ (66 aa).

As to expression, strongly expressed in the primary visual cortex.

It is found in the cytoplasm. The protein localises to the cytosol. Its subcellular location is the nucleus. Functionally, acts as a key regulator of dendritic field orientation during development of sensory cortex. Also directs dendrites toward active axon terminals when ectopically expressed. This chain is BTB/POZ domain-containing protein 3 (BTBD3), found in Callithrix jacchus (White-tufted-ear marmoset).